The chain runs to 464 residues: 3-isopropylmalate dehydratase large subunit (464 aa).

Residues C337, C397, and C400 each contribute to the [4Fe-4S] cluster site.

Belongs to the aconitase/IPM isomerase family. LeuC type 1 subfamily. As to quaternary structure, heterodimer of LeuC and LeuD. The cofactor is [4Fe-4S] cluster.

It catalyses the reaction (2R,3S)-3-isopropylmalate = (2S)-2-isopropylmalate. The protein operates within amino-acid biosynthesis; L-leucine biosynthesis; L-leucine from 3-methyl-2-oxobutanoate: step 2/4. Its function is as follows. Catalyzes the isomerization between 2-isopropylmalate and 3-isopropylmalate, via the formation of 2-isopropylmaleate. This Bacillus mycoides (strain KBAB4) (Bacillus weihenstephanensis) protein is 3-isopropylmalate dehydratase large subunit.